A 261-amino-acid chain; its full sequence is Hydroxyethylthiazole kinase (261 aa).

Residue Met-39 coordinates substrate. ATP is bound by residues Arg-115 and Thr-159. Gly-186 contributes to the substrate binding site.

The protein belongs to the Thz kinase family. Requires Mg(2+) as cofactor.

The catalysed reaction is 5-(2-hydroxyethyl)-4-methylthiazole + ATP = 4-methyl-5-(2-phosphooxyethyl)-thiazole + ADP + H(+). The protein operates within cofactor biosynthesis; thiamine diphosphate biosynthesis; 4-methyl-5-(2-phosphoethyl)-thiazole from 5-(2-hydroxyethyl)-4-methylthiazole: step 1/1. Catalyzes the phosphorylation of the hydroxyl group of 4-methyl-5-beta-hydroxyethylthiazole (THZ). This chain is Hydroxyethylthiazole kinase, found in Macrococcus caseolyticus (strain JCSC5402) (Macrococcoides caseolyticum).